A 227-amino-acid polypeptide reads, in one-letter code: Ras-related protein Rab-3C (227 aa).

Positions 39, 42, 43, 44, 45, 56, 57, 61, and 62 each coordinate GTP. A Mg(2+)-binding site is contributed by T44. The Switch 1 signature appears at 53-66 (DSFTSAFVSTVGID). T62 and D85 together coordinate Mg(2+). A Phosphothreonine; by LRRK2 modification is found at T86. The Switch 2 motif lies at 86 to 104 (TAGQERYRTITTAYYRGAM). 6 residues coordinate GTP: G88, N143, K144, D146, A174, and K175. 2 positions are modified to phosphoserine: S196 and S198. Positions 202 to 227 (DPAITAAKQSTRLKETPPPPQPNCGC) are disordered. T206 is subject to Phosphothreonine. Pro residues predominate over residues 217–227 (TPPPPQPNCGC). 2 S-geranylgeranyl cysteine lipidation sites follow: C225 and C227. C227 is modified (cysteine methyl ester).

This sequence belongs to the small GTPase superfamily. Rab family. In terms of assembly, interacts with RIMS1, RIMS2, RPH3A and RPH3AL. Interacts with GDI2, CHM and CHML; phosphorylation at Thr-86 disrupts these interactions. Interacts with MADD (via uDENN domain); the GTP-bound form is preferred for interaction. Mg(2+) is required as a cofactor. In terms of processing, phosphorylation of Thr-86 in the switch II region by LRRK2 prevents the association of RAB regulatory proteins, including CHM, CHML and RAB GDP dissociation inhibitor GDI2.

Its subcellular location is the cell membrane. It carries out the reaction GTP + H2O = GDP + phosphate + H(+). With respect to regulation, regulated by guanine nucleotide exchange factors (GEFs) which promote the exchange of bound GDP for free GTP. Regulated by GTPase activating proteins (GAPs) which increase the GTP hydrolysis activity. Inhibited by GDP dissociation inhibitors (GDIs) which prevent Rab-GDP dissociation. The small GTPases Rab are key regulators of intracellular membrane trafficking, from the formation of transport vesicles to their fusion with membranes. Rabs cycle between an inactive GDP-bound form and an active GTP-bound form that is able to recruit to membranes different sets of downstream effectors directly responsible for vesicle formation, movement, tethering and fusion. This chain is Ras-related protein Rab-3C, found in Mus musculus (Mouse).